A 130-amino-acid chain; its full sequence is Mitochondrial import protein 1 (130 aa).

Positions 1–41 are disordered; that stretch reads MSAEEISNPLAESGVTISSDSEQYSAPESASPQSPSSSSPA. Residues 15-24 show a composition bias toward polar residues; sequence VTISSDSEQY. Residues 25–41 show a composition bias toward low complexity; it reads SAPESASPQSPSSSSPA.

It belongs to the MIM1 family.

The protein resides in the mitochondrion outer membrane. In terms of biological role, required for the assembly of the TOM (translocase of outer membrane) receptor complex, which is responsible for the recognition and translocation of cytosolically synthesized mitochondrial preproteins. The sequence is that of Mitochondrial import protein 1 from Neurospora crassa (strain ATCC 24698 / 74-OR23-1A / CBS 708.71 / DSM 1257 / FGSC 987).